Consider the following 106-residue polypeptide: Small ribosomal subunit protein bS18 (106 aa).

Residues M1–S32 form a disordered region. The segment covering M7–G21 has biased composition (basic and acidic residues).

The protein belongs to the bacterial ribosomal protein bS18 family. In terms of assembly, part of the 30S ribosomal subunit. Forms a tight heterodimer with protein bS6.

Functionally, binds as a heterodimer with protein bS6 to the central domain of the 16S rRNA, where it helps stabilize the platform of the 30S subunit. The chain is Small ribosomal subunit protein bS18 from Magnetococcus marinus (strain ATCC BAA-1437 / JCM 17883 / MC-1).